The following is a 361-amino-acid chain: dTDP-glucose 4,6-dehydratase (361 aa).

NAD(+) contacts are provided by residues 11–12 (FI), 32–35 (DKLT), 58–59 (DI), 80–84 (LAAES), and Thr-99. A substrate-binding site is contributed by Ser-84. Thr-133 is a substrate binding site. Asp-134 (proton donor) is an active-site residue. Catalysis depends on proton acceptor residues Glu-135 and Tyr-167. NAD(+) is bound at residue 167–171 (YSASK). Asn-196 contributes to the substrate binding site. Asn-197 serves as a coordination point for NAD(+). Substrate contacts are provided by residues 206–207 (KL), 222–224 (PIY), Arg-231, Asn-266, and 296–300 (DRPGH).

This sequence belongs to the NAD(P)-dependent epimerase/dehydratase family. dTDP-glucose dehydratase subfamily. Homodimer. Requires NAD(+) as cofactor.

The enzyme catalyses dTDP-alpha-D-glucose = dTDP-4-dehydro-6-deoxy-alpha-D-glucose + H2O. The protein operates within carbohydrate biosynthesis; dTDP-L-rhamnose biosynthesis. Its pathway is bacterial outer membrane biogenesis; LPS O-antigen biosynthesis. Its function is as follows. Catalyzes the dehydration of dTDP-D-glucose to form dTDP-6-deoxy-D-xylo-4-hexulose via a three-step process involving oxidation, dehydration and reduction. In Shigella flexneri, this protein is dTDP-glucose 4,6-dehydratase (rfbB).